The following is a 512-amino-acid chain: Probable cytochrome P450 6d2 (512 aa).

A heme-binding site is contributed by Cys457.

Belongs to the cytochrome P450 family. It depends on heme as a cofactor.

It localises to the endoplasmic reticulum membrane. The protein resides in the microsome membrane. Its function is as follows. May be involved in the metabolism of insect hormones and in the breakdown of synthetic insecticides. The chain is Probable cytochrome P450 6d2 (Cyp6d2) from Drosophila melanogaster (Fruit fly).